Reading from the N-terminus, the 535-residue chain is Dimethylaniline monooxygenase [N-oxide-forming] 2 (535 aa).

A2 is modified (N-acetylalanine). FAD-binding positions include 9–13, E32, 40–41, and 61–62; these read GAGVS, LW, and NT. NADP(+) is bound by residues 60 to 61 and 195 to 198; these read TN and SAAD. A Glycyl lysine isopeptide (Lys-Gly) (interchain with G-Cter in SUMO) cross-link involves residue K492. A helical membrane pass occupies residues 510–530; the sequence is APVSFLLKILGLLAVVLAFFF.

It belongs to the FMO family. The cofactor is FAD. Requires Mg(2+) as cofactor.

The protein localises to the microsome membrane. Its subcellular location is the endoplasmic reticulum membrane. In terms of biological role, catalyzes the oxidative metabolism of numerous xenobiotics, including mainly therapeutic drugs and insecticides that contain a soft nucleophile, most commonly nitrogen and sulfur and participates to their bioactivation. Catalyzes the S-oxygenation of the prodrug ethionamide (ETA) to the S-oxide (ETASO), the first step in its bioactivation following by the second oxygenation to the sulfinic acid but to a lesser extend. This Mus musculus (Mouse) protein is Dimethylaniline monooxygenase [N-oxide-forming] 2.